Here is a 186-residue protein sequence, read N- to C-terminus: Ribosome-recycling factor (186 aa).

Belongs to the RRF family.

It is found in the cytoplasm. Its function is as follows. Responsible for the release of ribosomes from messenger RNA at the termination of protein biosynthesis. May increase the efficiency of translation by recycling ribosomes from one round of translation to another. The chain is Ribosome-recycling factor from Rhodopseudomonas palustris (strain ATCC BAA-98 / CGA009).